The following is a 721-amino-acid chain: Polyribonucleotide nucleotidyltransferase (721 aa).

Residues D485 and D491 each contribute to the Mg(2+) site. The KH domain occupies 552-611 (PKIYIVKIHPDKIREIIGPGGKVIRELQAMSNTRIEVDDSGTVKIAASTEEEARIAIKAV). Residues 621–689 (GEIYEGEVVR…PEGKIRLSRK (69 aa)) enclose the S1 motif domain. The disordered stretch occupies residues 687–721 (SRKALLPAPEKGEEDEKSAPRSRRPGGNSDRRNNR).

The protein belongs to the polyribonucleotide nucleotidyltransferase family. It depends on Mg(2+) as a cofactor.

It localises to the cytoplasm. The enzyme catalyses RNA(n+1) + phosphate = RNA(n) + a ribonucleoside 5'-diphosphate. Functionally, involved in mRNA degradation. Catalyzes the phosphorolysis of single-stranded polyribonucleotides processively in the 3'- to 5'-direction. The sequence is that of Polyribonucleotide nucleotidyltransferase from Desulfosudis oleivorans (strain DSM 6200 / JCM 39069 / Hxd3) (Desulfococcus oleovorans).